The primary structure comprises 454 residues: Serine/arginine (SR)-type shuttling mRNA binding protein HRB1 (454 aa).

Residues 1–141 (MSDQERGSEN…SSGARGDYGP (141 aa)) are disordered. Residues 14 to 24 (SRSRSRSPVRR) show a composition bias toward basic residues. Composition is skewed to basic and acidic residues over residues 25–38 (RMSD…DNHL) and 50–113 (KFAD…DYPR). The residue at position 127 (Arg-127) is an Omega-N-methylarginine. 2 consecutive RRM domains span residues 161–237 (NSIF…QDNP) and 261–338 (HEVI…SKES). Phosphoserine occurs at positions 338, 343, and 355. The 78-residue stretch at 376–453 (RLIYCSNLPF…CDLDISYAKR (78 aa)) folds into the RRM 3 domain.

Post-translationally, methylated by HMT1.

The protein resides in the cytoplasm. It is found in the nucleus. Its subcellular location is the P-body. It localises to the stress granule. Binds to intron-containing transcripts and is involved in quality control for the export of spliced mRNAs from the nucleus. Binds to pre-mRNAs until splicing is completed or until faulty mRNAs are degraded. On correctly spliced mRNAs, GBP2 and HRB1 recruit MEX67 to allow nuclear export. On faulty mRNAs, GBP2 and HRB1 associate with the TRAMP complex that guides those pre-mRNAs to the exosome for degradation. This is Serine/arginine (SR)-type shuttling mRNA binding protein HRB1 from Saccharomyces cerevisiae (strain ATCC 204508 / S288c) (Baker's yeast).